A 276-amino-acid polypeptide reads, in one-letter code: Pantothenate synthetase (276 aa).

27 to 34 is a binding site for ATP; the sequence is MGALHKGH. Residue histidine 34 is the Proton donor of the active site. Glutamine 58 is a (R)-pantoate binding site. Residue glutamine 58 participates in beta-alanine binding. Residue 147-150 coordinates ATP; it reads GKKD. Position 153 (glutamine 153) interacts with (R)-pantoate. Residues valine 176 and 184–187 each bind ATP; that span reads LSSR.

The protein belongs to the pantothenate synthetase family. As to quaternary structure, homodimer.

It localises to the cytoplasm. It catalyses the reaction (R)-pantoate + beta-alanine + ATP = (R)-pantothenate + AMP + diphosphate + H(+). It functions in the pathway cofactor biosynthesis; (R)-pantothenate biosynthesis; (R)-pantothenate from (R)-pantoate and beta-alanine: step 1/1. Catalyzes the condensation of pantoate with beta-alanine in an ATP-dependent reaction via a pantoyl-adenylate intermediate. This Helicobacter pylori (strain Shi470) protein is Pantothenate synthetase.